An 853-amino-acid polypeptide reads, in one-letter code: NADH-quinone oxidoreductase subunit G 2 (853 aa).

The 2Fe-2S ferredoxin-type domain occupies 1 to 78; that stretch reads MIKVTIDEQS…GMVVRTNTPL (78 aa). [2Fe-2S] cluster contacts are provided by Cys-34, Cys-45, Cys-48, and Cys-62. The 4Fe-4S His(Cys)3-ligated-type domain occupies 78–117; the sequence is LIEETRSSMLDMLLANHPLDCPICDKGGECELQDMVMAYG. [4Fe-4S] cluster-binding residues include His-94, Cys-98, Cys-101, Cys-107, Cys-148, Cys-151, Cys-154, Cys-198, Cys-224, Cys-227, Cys-231, and Cys-259. 2 4Fe-4S ferredoxin-type domains span residues 139 to 170 and 179 to 209; these read PVIIMNVNRCIQCQRCVRMCEEVVGAVALGTV and TGFEGSLASCDQCGNCVEVCPVGALMSFPYR. The 4Fe-4S Mo/W bis-MGD-type domain occupies 217 to 273; the sequence is LAETDTICPHCGTGCQLTVGARKGEFMRVRSDWEHGVNRETLCVRGRFGLDFIESRD.

The protein belongs to the complex I 75 kDa subunit family. It depends on [2Fe-2S] cluster as a cofactor. [4Fe-4S] cluster is required as a cofactor.

The catalysed reaction is a quinone + NADH + 5 H(+)(in) = a quinol + NAD(+) + 4 H(+)(out). Its function is as follows. NDH-1 shuttles electrons from NADH, via FMN and iron-sulfur (Fe-S) centers, to quinones in the respiratory chain. The immediate electron acceptor for the enzyme in this species is believed to be ubiquinone. Couples the redox reaction to proton translocation (for every two electrons transferred, four hydrogen ions are translocated across the cytoplasmic membrane), and thus conserves the redox energy in a proton gradient. The chain is NADH-quinone oxidoreductase subunit G 2 (nuoG2) from Rhizobium meliloti (strain 1021) (Ensifer meliloti).